The primary structure comprises 340 residues: Manganese-dependent ADP-ribose/CDP-alcohol diphosphatase (340 aa).

Methionine 1 is modified (N-acetylmethionine). Zn(2+)-binding residues include aspartate 25, glutamine 27, aspartate 74, asparagine 110, histidine 241, histidine 278, and histidine 280.

Belongs to the ADPRibase-Mn family. In terms of assembly, monomer. It depends on Mg(2+) as a cofactor.

It catalyses the reaction CDP-choline + H2O = phosphocholine + CMP + 2 H(+). It carries out the reaction ADP-D-ribose + H2O = D-ribose 5-phosphate + AMP + 2 H(+). The catalysed reaction is CDP-glycerol + H2O = sn-glycerol 3-phosphate + CMP + 2 H(+). In terms of biological role, hydrolyzes ADP-ribose, IDP-ribose, CDP-glycerol, CDP-choline and CDP-ethanolamine, but not other non-reducing ADP-sugars or CDP-glucose. May be involved in immune cell signaling as suggested by the second-messenger role of ADP-ribose, which activates TRPM2 as a mediator of oxidative/nitrosative stress. This chain is Manganese-dependent ADP-ribose/CDP-alcohol diphosphatase (Adprm), found in Mus musculus (Mouse).